The chain runs to 742 residues: Envelope glycoprotein H (742 aa).

The N-terminal stretch at 1 to 29 (MRPGLPSYLIVLAVCLLSHLLSSRYGAEA) is a signal peptide. Residues 30 to 719 (ISEPLDKAFH…VVDATDSRLL (690 aa)) are Virion surface-facing. 4 N-linked (GlcNAc...) asparagine; by host glycosylation sites follow: Asn-55, Asn-62, Asn-67, and Asn-192. The segment at 217-280 (YLIDELRYVK…QTEKHELLVL (64 aa)) is interaction with gL. Residues Asn-641 and Asn-700 are each glycosylated (N-linked (GlcNAc...) asparagine; by host). The chain crosses the membrane as a helical span at residues 720-740 (MMSVYALSAIIGIYLLYRMLK). Over 741-742 (TC) the chain is Intravirion.

The protein belongs to the herpesviridae glycoprotein H family. As to quaternary structure, interacts with glycoprotein L (gL); this interaction is necessary for the correct processing and cell surface expression of gH. The heterodimer gH/gL seems to interact with gB trimers during fusion. Forms the envelope pentamer complex (PC) composed of gH, gL, UL128, UL130, and UL131A. The pentamer interacts with host NRP2. Forms the envelope trimer complex composed of gH, gL, and gO. The trimer interacts with host PDGFRA. The trimer also interacts with host EPHA2. Post-translationally, N-glycosylated, O-glycosylated, and sialylated.

It is found in the virion membrane. The protein localises to the host cell membrane. It localises to the host endosome membrane. Functionally, the heterodimer glycoprotein H-glycoprotein L is required for the fusion of viral and plasma membranes leading to virus entry into the host cell. Following initial binding to host receptor, membrane fusion is mediated by the fusion machinery composed of gB and the heterodimer gH/gL. May also be involved in the fusion between the virion envelope and the outer nuclear membrane during virion morphogenesis. In human cytomegalovirus, forms two distincts complexes to mediate viral entry, a trimer and a pentamer at the surface of the virion envelope. The gH-gL-gO trimer is required for infection in fibroblasts by interacting with host PDGFRA, and in glioblastoma cells by interacting with host EPHA2. The gH-gL-UL128-UL130-UL131A pentamer is essential for viral entry in epithelial, endothelial and myeloid cells via interaction with host NRP2. This chain is Envelope glycoprotein H, found in Human cytomegalovirus (strain Towne) (HHV-5).